A 156-amino-acid polypeptide reads, in one-letter code: E3 ubiquitin-protein ligase LAP (156 aa).

The RING-CH-type zinc finger occupies 1-55 (MSDICWICNDVCDERNNFCGCNEEYKVVHIKCMQLWINYSKKKECNLCKTKYNIK). Residues 1 to 73 (MSDICWICND…WNWCFNDKKT (73 aa)) lie on the Cytoplasmic side of the membrane. 8 residues coordinate Zn(2+): C5, C8, C19, C21, H29, C32, C45, and C48. A helical transmembrane segment spans residues 74-94 (TLFKIFFILFALVFIFLTITL). Topologically, residues 95-111 (SNDMANLVTGINDLICS) are lumenal. The chain crosses the membrane as a helical span at residues 112–132 (IIFLIVYTVVMLTSICFSVFV). Residues 133 to 156 (VAIVVDFLLEAKEKNSFLTIREIV) lie on the Cytoplasmic side of the membrane.

This sequence belongs to the poxviridae LAP protein family.

The protein localises to the host membrane. The protein resides in the host Golgi apparatus. It is found in the host trans-Golgi network membrane. It localises to the host early endosome membrane. It catalyses the reaction S-ubiquitinyl-[E2 ubiquitin-conjugating enzyme]-L-cysteine + [acceptor protein]-L-lysine = [E2 ubiquitin-conjugating enzyme]-L-cysteine + N(6)-ubiquitinyl-[acceptor protein]-L-lysine.. Functionally, E3 ubiquitin-protein ligase which promotes ubiquitination and subsequent degradation of host MHC-I and CD4 molecules, presumably to prevent lysis of infected cells by cytotoxic T-lymphocytes and NK cell. Binds target molecules through transmembrane interaction. The result of this ubiquitination is the enhancement of the endocytosis of the target chain and the delivery to the lysosome, where it is proteolytically destroyed. The polypeptide is E3 ubiquitin-protein ligase LAP (Yaba-like disease virus (YLDV)).